The primary structure comprises 335 residues: ATP-dependent 6-phosphofructokinase (335 aa).

Residue glycine 11 participates in ATP binding. Arginine 21–arginine 25 is a binding site for ADP. ATP is bound by residues arginine 72–tyrosine 73 and glycine 102–serine 105. Aspartate 103 contacts Mg(2+). Substrate is bound at residue threonine 125 to aspartate 127. Aspartate 127 functions as the Proton acceptor in the catalytic mechanism. An ADP-binding site is contributed by arginine 154. Substrate-binding positions include arginine 162 and methionine 169–arginine 171. ADP contacts are provided by residues glycine 185 to aspartate 187 and lysine 213 to histidine 215. Residues glutamate 222, arginine 244, and histidine 250–arginine 253 each bind substrate.

This sequence belongs to the phosphofructokinase type A (PFKA) family. ATP-dependent PFK group I subfamily. Prokaryotic clade 'B1' sub-subfamily. In terms of assembly, homotetramer. The cofactor is Mg(2+).

The protein localises to the cytoplasm. The enzyme catalyses beta-D-fructose 6-phosphate + ATP = beta-D-fructose 1,6-bisphosphate + ADP + H(+). It functions in the pathway carbohydrate degradation; glycolysis; D-glyceraldehyde 3-phosphate and glycerone phosphate from D-glucose: step 3/4. Its activity is regulated as follows. Allosterically activated by ADP and other diphosphonucleosides, and allosterically inhibited by phosphoenolpyruvate. Functionally, catalyzes the phosphorylation of D-fructose 6-phosphate to fructose 1,6-bisphosphate by ATP, the first committing step of glycolysis. In Streptococcus pneumoniae (strain ATCC BAA-255 / R6), this protein is ATP-dependent 6-phosphofructokinase.